A 131-amino-acid chain; its full sequence is MSMSDPIADLLTRIRNAQMVAKPTVMVPSSKVKVAIAQVLKDEGYIDGFQVKTEAGKSELEIALKYYAGRPVIERIERVSRPGLRVYKGRDAIPQVMNGLGVAIVTTPKGVMTDRKARATGVGGEVLCYVA.

It belongs to the universal ribosomal protein uS8 family. In terms of assembly, part of the 30S ribosomal subunit. Contacts proteins S5 and S12.

Its function is as follows. One of the primary rRNA binding proteins, it binds directly to 16S rRNA central domain where it helps coordinate assembly of the platform of the 30S subunit. The polypeptide is Small ribosomal subunit protein uS8 (Verminephrobacter eiseniae (strain EF01-2)).